The sequence spans 266 residues: Glycine--tRNA ligase beta subunit (266 aa).

The protein belongs to the class-II aminoacyl-tRNA synthetase family. As to quaternary structure, tetramer of two alpha and two beta subunits.

Its subcellular location is the cytoplasm. The enzyme catalyses tRNA(Gly) + glycine + ATP = glycyl-tRNA(Gly) + AMP + diphosphate. In Moraxella catarrhalis (Branhamella catarrhalis), this protein is Glycine--tRNA ligase beta subunit (glyS).